The following is a 232-amino-acid chain: Ribose-5-phosphate isomerase A (232 aa).

Substrate-binding positions include 29–32, 84–87, and 97–100; these read TGST, DGAD, and KGGG. Glu106 (proton acceptor) is an active-site residue. A substrate-binding site is contributed by Lys124.

Belongs to the ribose 5-phosphate isomerase family. In terms of assembly, homodimer.

The catalysed reaction is aldehydo-D-ribose 5-phosphate = D-ribulose 5-phosphate. It participates in carbohydrate degradation; pentose phosphate pathway; D-ribose 5-phosphate from D-ribulose 5-phosphate (non-oxidative stage): step 1/1. Functionally, catalyzes the reversible conversion of ribose-5-phosphate to ribulose 5-phosphate. The chain is Ribose-5-phosphate isomerase A from Brucella suis biovar 1 (strain 1330).